Consider the following 151-residue polypeptide: Protein-export protein SecB (151 aa).

This sequence belongs to the SecB family. As to quaternary structure, homotetramer, a dimer of dimers. One homotetramer interacts with 1 SecA dimer.

Its subcellular location is the cytoplasm. One of the proteins required for the normal export of preproteins out of the cell cytoplasm. It is a molecular chaperone that binds to a subset of precursor proteins, maintaining them in a translocation-competent state. It also specifically binds to its receptor SecA. The protein is Protein-export protein SecB of Acinetobacter baylyi (strain ATCC 33305 / BD413 / ADP1).